The chain runs to 87 residues: Large ribosomal subunit protein uL23c (87 aa).

It belongs to the universal ribosomal protein uL23 family. In terms of assembly, part of the 50S ribosomal subunit.

It is found in the plastid. The protein resides in the chloroplast. Its function is as follows. Binds to 23S rRNA. This Bigelowiella natans (Pedinomonas minutissima) protein is Large ribosomal subunit protein uL23c (rpl23).